The primary structure comprises 136 residues: Ribonuclease VapC1 (136 aa).

The 112-residue stretch at 18–129 (ILVDTSVLID…KKHFERLKEF (112 aa)) folds into the PINc domain. The Mg(2+) site is built by D21 and D101.

It belongs to the PINc/VapC protein family. The cofactor is Mg(2+).

Its function is as follows. Toxic component of a type II toxin-antitoxin (TA) system. An RNase. Its cognate antitoxin is VapB1. This is Ribonuclease VapC1 from Methanocaldococcus jannaschii (strain ATCC 43067 / DSM 2661 / JAL-1 / JCM 10045 / NBRC 100440) (Methanococcus jannaschii).